Consider the following 384-residue polypeptide: Large ribosomal subunit protein uL3m (384 aa).

Disordered regions lie at residues Asn80 to Glu101 and Gln237 to Arg262. Residues Ser240 to Thr249 show a composition bias toward polar residues.

It belongs to the universal ribosomal protein uL3 family. Component of the mitochondrial large ribosomal subunit (mt-LSU). Mature N.crassa 74S mitochondrial ribosomes consist of a small (37S) and a large (54S) subunit. The 37S small subunit contains a 16S ribosomal RNA (16S mt-rRNA) and 32 different proteins. The 54S large subunit contains a 23S rRNA (23S mt-rRNA) and 42 different proteins.

The protein localises to the mitochondrion. Its function is as follows. Component of the mitochondrial ribosome (mitoribosome), a dedicated translation machinery responsible for the synthesis of mitochondrial genome-encoded proteins, including at least some of the essential transmembrane subunits of the mitochondrial respiratory chain. The mitoribosomes are attached to the mitochondrial inner membrane and translation products are cotranslationally integrated into the membrane. The chain is Large ribosomal subunit protein uL3m (mrpl9) from Neurospora crassa (strain ATCC 24698 / 74-OR23-1A / CBS 708.71 / DSM 1257 / FGSC 987).